Reading from the N-terminus, the 743-residue chain is Amylovoran biosynthesis protein AmsF (743 aa).

An N-terminal signal peptide occupies residues 1-27 (MKRRELIRTAFSTIVATAALSSVSARA).

This sequence to R.meliloti ExoP.

The protein resides in the periplasm. It functions in the pathway glycan metabolism; exopolysaccharide biosynthesis. Its function is as follows. Involved in the biosynthesis of amylovoran which functions as a virulence factor. May be involved in the polymerization or late modification of the repeating units. In Erwinia amylovora (Fire blight bacteria), this protein is Amylovoran biosynthesis protein AmsF (amsF).